Consider the following 379-residue polypeptide: Histidinol-phosphate aminotransferase (379 aa).

Lys-231 carries the N6-(pyridoxal phosphate)lysine modification.

The protein belongs to the class-II pyridoxal-phosphate-dependent aminotransferase family. Histidinol-phosphate aminotransferase subfamily. Homodimer. Pyridoxal 5'-phosphate serves as cofactor.

It catalyses the reaction L-histidinol phosphate + 2-oxoglutarate = 3-(imidazol-4-yl)-2-oxopropyl phosphate + L-glutamate. It participates in amino-acid biosynthesis; L-histidine biosynthesis; L-histidine from 5-phospho-alpha-D-ribose 1-diphosphate: step 7/9. This is Histidinol-phosphate aminotransferase from Mycolicibacterium smegmatis (strain ATCC 700084 / mc(2)155) (Mycobacterium smegmatis).